A 492-amino-acid chain; its full sequence is WD repeat-containing protein JIP5 (492 aa).

5 WD repeats span residues Arg127 to Lys166, Lys178 to Ser217, Arg236 to Ser274, Asp276 to Gln317, and Arg365 to Asn405. Composition is skewed to acidic residues over residues Glu404–Glu414 and Asp422–Thr433. The interval Glu404–Met472 is disordered. Basic and acidic residues predominate over residues Lys449–Asn462.

The protein belongs to the WD repeat WDR55 family. In terms of assembly, interacts with BRE1, BUD27 and GIS1.

It localises to the nucleus. It is found in the nucleolus. In Saccharomyces cerevisiae (strain YJM789) (Baker's yeast), this protein is WD repeat-containing protein JIP5 (JIP5).